A 504-amino-acid polypeptide reads, in one-letter code: Lysine--tRNA ligase (504 aa).

The 'HIGH' region signature appears at Pro-23–Asn-31.

This sequence belongs to the class-I aminoacyl-tRNA synthetase family.

The protein localises to the cytoplasm. The enzyme catalyses tRNA(Lys) + L-lysine + ATP = L-lysyl-tRNA(Lys) + AMP + diphosphate. This chain is Lysine--tRNA ligase, found in Picrophilus torridus (strain ATCC 700027 / DSM 9790 / JCM 10055 / NBRC 100828 / KAW 2/3).